Here is a 493-residue protein sequence, read N- to C-terminus: NAD(P)H-quinone oxidoreductase chain 4, chloroplastic (493 aa).

A run of 14 helical transmembrane segments spans residues 4–24, 34–54, 87–107, 111–131, 134–154, 167–187, 212–232, 242–262, 276–296, 313–333, 334–354, 385–405, 417–437, and 462–482; these read FPWLSIIILFPLFAAFFIPLL, WYTLGICLLDFLVMSYIFGYY, MGLILLTGLVTTLAVLAAWPI, PKLFYFLMLVMYSGQIGLFTS, LFLFFLMWELELIPIYLLISL, FIFYTAIGSLFLFIATFTVCF, ILYLGFGFAYAVKLPIIPFHT, HYSTCMLLAGILLKMGGYGWI, FAPWLVILGTVQIIYAASVCL, MGFVLIGICSFTNIGLSGAIC, QMISHGLIGASLFFLAGTTYD, SLALPTMSGFVAEMMIFLGII, FIILFQALGVILTPIYLLSML, and VFIIVSLFIPVIIIGLYPNIL.

It belongs to the complex I subunit 4 family.

The protein localises to the plastid. Its subcellular location is the chloroplast thylakoid membrane. The catalysed reaction is a plastoquinone + NADH + (n+1) H(+)(in) = a plastoquinol + NAD(+) + n H(+)(out). The enzyme catalyses a plastoquinone + NADPH + (n+1) H(+)(in) = a plastoquinol + NADP(+) + n H(+)(out). The polypeptide is NAD(P)H-quinone oxidoreductase chain 4, chloroplastic (Chara vulgaris (Common stonewort)).